We begin with the raw amino-acid sequence, 382 residues long: 4-hydroxy-3-methylbut-2-en-1-yl diphosphate synthase (flavodoxin) (382 aa).

Positions 273, 276, 308, and 315 each coordinate [4Fe-4S] cluster.

Belongs to the IspG family. [4Fe-4S] cluster serves as cofactor.

The catalysed reaction is (2E)-4-hydroxy-3-methylbut-2-enyl diphosphate + oxidized [flavodoxin] + H2O + 2 H(+) = 2-C-methyl-D-erythritol 2,4-cyclic diphosphate + reduced [flavodoxin]. The protein operates within isoprenoid biosynthesis; isopentenyl diphosphate biosynthesis via DXP pathway; isopentenyl diphosphate from 1-deoxy-D-xylulose 5-phosphate: step 5/6. Converts 2C-methyl-D-erythritol 2,4-cyclodiphosphate (ME-2,4cPP) into 1-hydroxy-2-methyl-2-(E)-butenyl 4-diphosphate. The protein is 4-hydroxy-3-methylbut-2-en-1-yl diphosphate synthase (flavodoxin) of Gluconacetobacter diazotrophicus (strain ATCC 49037 / DSM 5601 / CCUG 37298 / CIP 103539 / LMG 7603 / PAl5).